The chain runs to 333 residues: Isoaspartyl peptidase/L-asparaginase (333 aa).

Residue Thr191 is the Nucleophile of the active site. Substrate contacts are provided by residues 219–222 and 242–245; these read RVGD and TGHG.

Belongs to the Ntn-hydrolase family. As to quaternary structure, heterodimer of an alpha and beta chain produced by autocleavage. This heterodimer may then dimerize in turn, giving rise to a heterotetramer. Post-translationally, cleaved into an alpha and beta chain by autocatalysis; this activates the enzyme. The N-terminal residue of the beta subunit is responsible for the nucleophile hydrolase activity. In terms of tissue distribution, present in testis, brain, liver, kidney, heart and skeletal muscle. In brain, specifically present in the astrocytic lineage. Present in sperm (at protein level).

It is found in the cytoplasm. The catalysed reaction is L-asparagine + H2O = L-aspartate + NH4(+). The enzyme catalyses Cleavage of a beta-linked Asp residue from the N-terminus of a polypeptide.. Functionally, has both L-asparaginase and beta-aspartyl peptidase activity. Is highly active with L-Asp beta-methyl ester. Besides, has catalytic activity toward beta-aspartyl dipeptides and their methyl esters, including beta-L-Asp-L-Phe, beta-L-Asp-L-Phe methyl ester (aspartame), beta-L-Asp-L-Ala, beta-L-Asp-L-Leu and beta-L-Asp-L-Lys. Does not have aspartylglucosaminidase activity and is inactive toward GlcNAc-L-Asn. Likewise, has no activity toward glutamine. May be involved in the production of L-aspartate, which can act as an excitatory neurotransmitter in some brain regions. The protein is Isoaspartyl peptidase/L-asparaginase (Asrgl1) of Rattus norvegicus (Rat).